A 90-amino-acid polypeptide reads, in one-letter code: Small ribosomal subunit protein uS17 (90 aa).

It belongs to the universal ribosomal protein uS17 family. In terms of assembly, part of the 30S ribosomal subunit.

Its function is as follows. One of the primary rRNA binding proteins, it binds specifically to the 5'-end of 16S ribosomal RNA. The sequence is that of Small ribosomal subunit protein uS17 from Cutibacterium acnes (strain DSM 16379 / KPA171202) (Propionibacterium acnes).